The sequence spans 465 residues: tRNA modification GTPase MnmE (465 aa).

Residues Arg-21, Glu-85, and Lys-124 each coordinate (6S)-5-formyl-5,6,7,8-tetrahydrofolate. One can recognise a TrmE-type G domain in the interval 220–387; that stretch reads GVPVAIIGET…LQKMLINAAH (168 aa). Asn-230 lines the K(+) pocket. Residues 230–235, 249–255, 274–277, and 337–340 each bind GTP; these read NAGKST, SDIHGTT, DTAG, and NKAD. A Mg(2+)-binding site is contributed by Ser-234. K(+)-binding residues include Ser-249, Ile-251, and Thr-254. Thr-255 serves as a coordination point for Mg(2+). Lys-465 contributes to the (6S)-5-formyl-5,6,7,8-tetrahydrofolate binding site.

The protein belongs to the TRAFAC class TrmE-Era-EngA-EngB-Septin-like GTPase superfamily. TrmE GTPase family. As to quaternary structure, homodimer. Heterotetramer of two MnmE and two MnmG subunits. K(+) is required as a cofactor.

It localises to the cytoplasm. Functionally, exhibits a very high intrinsic GTPase hydrolysis rate. Involved in the addition of a carboxymethylaminomethyl (cmnm) group at the wobble position (U34) of certain tRNAs, forming tRNA-cmnm(5)s(2)U34. The sequence is that of tRNA modification GTPase MnmE from Bacteroides thetaiotaomicron (strain ATCC 29148 / DSM 2079 / JCM 5827 / CCUG 10774 / NCTC 10582 / VPI-5482 / E50).